The sequence spans 279 residues: Sulfur carrier protein FdhD (279 aa).

Cys122 functions as the Cysteine persulfide intermediate in the catalytic mechanism.

This sequence belongs to the FdhD family.

Its subcellular location is the cytoplasm. Required for formate dehydrogenase (FDH) activity. Acts as a sulfur carrier protein that transfers sulfur from IscS to the molybdenum cofactor prior to its insertion into FDH. The polypeptide is Sulfur carrier protein FdhD (Thermoplasma volcanium (strain ATCC 51530 / DSM 4299 / JCM 9571 / NBRC 15438 / GSS1)).